A 160-amino-acid polypeptide reads, in one-letter code: Ribosomal RNA large subunit methyltransferase H (160 aa).

S-adenosyl-L-methionine is bound by residues Leu76, Gly108, and 127-132 (LGKMTW).

Belongs to the RNA methyltransferase RlmH family. Homodimer.

The protein localises to the cytoplasm. The catalysed reaction is pseudouridine(1915) in 23S rRNA + S-adenosyl-L-methionine = N(3)-methylpseudouridine(1915) in 23S rRNA + S-adenosyl-L-homocysteine + H(+). In terms of biological role, specifically methylates the pseudouridine at position 1915 (m3Psi1915) in 23S rRNA. This Rhizobium johnstonii (strain DSM 114642 / LMG 32736 / 3841) (Rhizobium leguminosarum bv. viciae) protein is Ribosomal RNA large subunit methyltransferase H.